Consider the following 255-residue polypeptide: 14-3-3 protein epsilon (255 aa).

Methionine 1 bears the N-acetylmethionine mark. Position 50 is an N6-acetyllysine; alternate (lysine 50). Residue lysine 50 forms a Glycyl lysine isopeptide (Lys-Gly) (interchain with G-Cter in SUMO2); alternate linkage. Serine 65 carries the post-translational modification Phosphoserine. Residues lysine 69, lysine 118, and lysine 123 each carry the N6-acetyllysine modification. Phosphotyrosine is present on tyrosine 131. At threonine 137 the chain carries Phosphothreonine. Phosphoserine is present on serine 210. A Phosphothreonine modification is found at threonine 232. The segment at 234–255 (DMQGDGEEQNKEALQDVEDENQ) is disordered.

Belongs to the 14-3-3 family. As to quaternary structure, homodimer. Heterodimerizes with YWHAZ. Interacts with PKA-phosphorylated AANAT. Interacts with ABL1 (phosphorylated form); the interaction retains it in the cytoplasm. Interacts with ARHGEF28. Interacts with BEX3. Weakly interacts with CDKN1B. Interacts with the 'Thr-369' phosphorylated form of DAPK2. Interacts with DENND1A. Interacts with GAB2. Interacts with phosphorylated GRB10. Interacts with KSR1. Interacts with NDEL1. Interacts with PI4KB, TBC1D22A and TBC1D22B. Interacts with the phosphorylated (by AKT1) form of SRPK2. Interacts with TIAM2. Interacts with the 'Ser-1134' and 'Ser-1161' phosphorylated form of SOS1. Interacts with ZFP36 (via phosphorylated form). Interacts with SLITRK1. Interacts with HSF1 (via phosphorylated form); this interaction promotes HSF1 sequestration in the cytoplasm in a ERK-dependent manner. Interacts with RIPOR2. Interacts with KLHL22; required for the nuclear localization of KLHL22 upon amino acid starvation. Interacts with CRTC1. Interacts with CRTC2 (probably when phosphorylated at 'Ser-171'). Interacts with CRTC3 (probably when phosphorylated at 'Ser-162' and/or 'Ser-273'). Interacts with ATP2B1 and ATP2B3; this interaction inhibits calcium-transporting ATPase activity. Interacts with MEFV. Interacts with RNF115. Interacts with GPR15; this interaction promotes ER-to-Golgi transport of GPR15.

It is found in the nucleus. The protein localises to the cytoplasm. It localises to the melanosome. Its function is as follows. Adapter protein implicated in the regulation of a large spectrum of both general and specialized signaling pathways. Binds to a large number of partners, usually by recognition of a phosphoserine or phosphothreonine motif. Binding generally results in the modulation of the activity of the binding partner. Positively regulates phosphorylated protein HSF1 nuclear export to the cytoplasm. The sequence is that of 14-3-3 protein epsilon (Ywhae) from Rattus norvegicus (Rat).